Consider the following 91-residue polypeptide: Small ribosomal subunit protein bS20 (91 aa).

Residues 1–28 are disordered; sequence MPNIKSAIKRTKTIEKRRAHRASQKSDL. Residues 7-23 show a composition bias toward basic residues; that stretch reads AIKRTKTIEKRRAHRAS.

The protein belongs to the bacterial ribosomal protein bS20 family.

Binds directly to 16S ribosomal RNA. This Brevibacillus brevis (strain 47 / JCM 6285 / NBRC 100599) protein is Small ribosomal subunit protein bS20.